The following is a 433-amino-acid chain: E1B 55 kDa protein (433 aa).

This sequence belongs to the adenoviridae E1B 55 kDa protein family. Interacts with host PML-4 and PML-5; this interaction promotes efficient subnuclear targeting of E1B-55K to PML nuclear bodies. Interacts with E4-ORF3 protein. Interacts with E4-ORF6 protein.

It localises to the host nucleus. The protein localises to the host cytoplasm. Functionally, plays a major role to prevent cellular inhibition of viral genome replication. Assembles an SCF-like E3 ubiquitin ligase complex based on the cellular proteins ELOB, ELOC, CUL5 and RBX1, in cooperation with viral E4orf6. This viral RING-type ligase ubiquitinates cellular substrates and targets them to proteasomal degradation: TP53/p53, LIG4, MRE11-RAD50-NBS1 (MRN) complex, ITGA3, DAXX and BLM. E1B-55K probably acts as the substrate-specific adapter of the SCF-like E3 ubiquitin ligase complex. Degradation of host TP53/p53 activity is essential for preventing E1A-induced TP53 accumulation that would otherwise lead to cell apoptosis and growth arrest. E1B-55K also inactivates TP53 transcription-factor activity by binding its transactivation domain. E1B-55K also functions as a SUMO1 E3 ligase for TP53 which causes the latter to be sequestered in promyelocytic leukemia (PML) nuclear bodies thereby contributing to maximal inhibition of TP53 function. In Murine adenovirus A serotype 1 (MAdV-1), this protein is E1B 55 kDa protein.